A 267-amino-acid polypeptide reads, in one-letter code: GTP cyclohydrolase FolE2 (267 aa).

This sequence belongs to the GTP cyclohydrolase IV family.

It catalyses the reaction GTP + H2O = 7,8-dihydroneopterin 3'-triphosphate + formate + H(+). It functions in the pathway cofactor biosynthesis; 7,8-dihydroneopterin triphosphate biosynthesis; 7,8-dihydroneopterin triphosphate from GTP: step 1/1. In terms of biological role, converts GTP to 7,8-dihydroneopterin triphosphate. This is GTP cyclohydrolase FolE2 from Citrifermentans bemidjiense (strain ATCC BAA-1014 / DSM 16622 / JCM 12645 / Bem) (Geobacter bemidjiensis).